The following is a 126-amino-acid chain: MPEPAKSAPAPKKGSKKAVTKAQKKDGKKRKRSRKESYSIYVYKVLKQVHPDTGISSKAMGIMNSFVNDIFERIAGEASRLAHYNKRSTITSREIQTAVRLLLPGELAKHAVSEGTKAVTKYTSSK.

Over residues 1–12 the composition is skewed to low complexity; that stretch reads MPEPAKSAPAPK. Residues 1 to 35 form a disordered region; it reads MPEPAKSAPAPKKGSKKAVTKAQKKDGKKRKRSRK. N-acetylproline is present on Pro-2. Position 3 is an ADP-ribosyl glutamic acid (Glu-3). An N6-(2-hydroxyisobutyryl)lysine; alternate modification is found at Lys-6. An N6-(beta-hydroxybutyryl)lysine; alternate modification is found at Lys-6. Position 6 is an N6-acetyllysine; alternate (Lys-6). An N6-butyryllysine; alternate modification is found at Lys-6. At Lys-6 the chain carries N6-crotonyllysine; alternate. The residue at position 6 (Lys-6) is an N6-lactoyllysine; alternate. Lys-6 participates in a covalent cross-link: Glycyl lysine isopeptide (Lys-Gly) (interchain with G-Cter in SUMO2); alternate. Ser-7 carries the ADP-ribosylserine modification. Lys-12 is subject to N6-(beta-hydroxybutyryl)lysine; alternate. N6-acetyllysine; alternate occurs at positions 12 and 13. 2 positions are modified to N6-crotonyllysine; alternate: Lys-12 and Lys-13. Residue Lys-12 is modified to N6-lactoyllysine; alternate. N6-(2-hydroxyisobutyryl)lysine; alternate is present on Lys-13. Phosphoserine; by STK4/MST1 is present on Ser-15. An N6-acetyllysine; alternate mark is found at Lys-16, Lys-17, Lys-21, and Lys-24. N6-crotonyllysine; alternate is present on residues Lys-16, Lys-17, Lys-21, and Lys-24. N6-lactoyllysine; alternate is present on residues Lys-16, Lys-17, Lys-21, and Lys-24. An N6-(beta-hydroxybutyryl)lysine; alternate mark is found at Lys-17 and Lys-21. The residue at position 17 (Lys-17) is an N6-glutaryllysine; alternate. An N6-(2-hydroxyisobutyryl)lysine; alternate mark is found at Lys-21 and Lys-24. Position 21 is an N6-butyryllysine; alternate (Lys-21). Residue Lys-21 forms a Glycyl lysine isopeptide (Lys-Gly) (interchain with G-Cter in SUMO2); alternate linkage. An N6-(2-hydroxyisobutyryl)lysine modification is found at Lys-25. Lys-35 carries the post-translational modification N6-(2-hydroxyisobutyryl)lysine; alternate. At Lys-35 the chain carries N6-(beta-hydroxybutyryl)lysine; alternate. N6-crotonyllysine; alternate is present on Lys-35. Lys-35 is modified (N6-glutaryllysine; alternate). Lys-35 is modified (N6-succinyllysine; alternate). Residue Lys-35 forms a Glycyl lysine isopeptide (Lys-Gly) (interchain with G-Cter in ubiquitin); alternate linkage. Glu-36 bears the PolyADP-ribosyl glutamic acid mark. Ser-37 is subject to Phosphoserine; by AMPK. An N6-(2-hydroxyisobutyryl)lysine; alternate mark is found at Lys-44, Lys-47, and Lys-58. N6-lactoyllysine; alternate is present on Lys-44. N6-glutaryllysine; alternate occurs at positions 44 and 47. Lys-47 bears the N6-methyllysine; alternate mark. An N6,N6-dimethyllysine; alternate modification is found at Lys-58. At Arg-80 the chain carries Dimethylated arginine. Lys-86 carries the N6-(2-hydroxyisobutyryl)lysine; alternate modification. N6-(beta-hydroxybutyryl)lysine; alternate is present on Lys-86. N6-acetyllysine; alternate is present on Lys-86. The residue at position 86 (Lys-86) is an N6-lactoyllysine; alternate. Lys-86 is modified (N6,N6,N6-trimethyllysine; alternate). Omega-N-methylarginine occurs at positions 87 and 93. Lys-109 bears the N6-(2-hydroxyisobutyryl)lysine; alternate mark. The residue at position 109 (Lys-109) is an N6-lactoyllysine; alternate. The residue at position 109 (Lys-109) is an N6-glutaryllysine; alternate. Residue Lys-109 is modified to N6-methyllysine; alternate. The O-linked (GlcNAc) serine glycan is linked to Ser-113. Residue Thr-116 is modified to Phosphothreonine. Residues Lys-117 and Lys-121 each carry the N6-(2-hydroxyisobutyryl)lysine; alternate modification. N6-(beta-hydroxybutyryl)lysine; alternate occurs at positions 117 and 121. Lys-117 and Lys-121 each carry N6-lactoyllysine; alternate. Residues Lys-117 and Lys-121 each carry the N6-glutaryllysine; alternate modification. Lys-117 and Lys-121 each carry N6-succinyllysine; alternate. At Lys-117 the chain carries N6-malonyllysine; alternate. Lys-117 is modified (N6-methylated lysine; alternate). Lys-121 is covalently cross-linked (Glycyl lysine isopeptide (Lys-Gly) (interchain with G-Cter in ubiquitin); alternate).

The protein belongs to the histone H2B family. As to quaternary structure, the nucleosome is a histone octamer containing two molecules each of H2A, H2B, H3 and H4 assembled in one H3-H4 heterotetramer and two H2A-H2B heterodimers. The octamer wraps approximately 147 bp of DNA. Post-translationally, monoubiquitination at Lys-35 (H2BK34Ub) by the MSL1/MSL2 dimer is required for histone H3 'Lys-4' (H3K4me) and 'Lys-79' (H3K79me) methylation and transcription activation at specific gene loci, such as HOXA9 and MEIS1 loci. Similarly, monoubiquitination at Lys-121 (H2BK120Ub) by the RNF20/40 complex gives a specific tag for epigenetic transcriptional activation and is also prerequisite for histone H3 'Lys-4' and 'Lys-79' methylation. It also functions cooperatively with the FACT dimer to stimulate elongation by RNA polymerase II. H2BK120Ub also acts as a regulator of mRNA splicing: deubiquitination by USP49 is required for efficient cotranscriptional splicing of a large set of exons. In terms of processing, phosphorylation at Ser-37 (H2BS36ph) by AMPK in response to stress promotes transcription. Phosphorylated on Ser-15 (H2BS14ph) by STK4/MST1 during apoptosis; which facilitates apoptotic chromatin condensation. Also phosphorylated on Ser-15 in response to DNA double strand breaks (DSBs), and in correlation with somatic hypermutation and immunoglobulin class-switch recombination. GlcNAcylation at Ser-113 promotes monoubiquitination of Lys-121. It fluctuates in response to extracellular glucose, and associates with transcribed genes. Post-translationally, ADP-ribosylated by PARP1 or PARP2 on Ser-7 (H2BS6ADPr) in response to DNA damage. H2BS6ADPr promotes recruitment of CHD1L. Mono-ADP-ribosylated on Glu-3 (H2BE2ADPr) by PARP3 in response to single-strand breaks. Poly ADP-ribosylation on Glu-36 (H2BE35ADPr) by PARP1 regulates adipogenesis: it inhibits phosphorylation at Ser-37 (H2BS36ph), thereby blocking expression of pro-adipogenetic genes. In terms of processing, crotonylation (Kcr) is specifically present in male germ cells and marks testis-specific genes in post-meiotic cells, including X-linked genes that escape sex chromosome inactivation in haploid cells. Crotonylation marks active promoters and enhancers and confers resistance to transcriptional repressors. It is also associated with post-meiotically activated genes on autosomes. Lactylated in macrophages by EP300/P300 by using lactoyl-CoA directly derived from endogenous or exogenous lactate, leading to stimulates gene transcription.

It localises to the nucleus. The protein resides in the chromosome. Functionally, core component of nucleosome. Nucleosomes wrap and compact DNA into chromatin, limiting DNA accessibility to the cellular machineries which require DNA as a template. Histones thereby play a central role in transcription regulation, DNA repair, DNA replication and chromosomal stability. DNA accessibility is regulated via a complex set of post-translational modifications of histones, also called histone code, and nucleosome remodeling. Has broad antibacterial activity. May contribute to the formation of the functional antimicrobial barrier of the colonic epithelium, and to the bactericidal activity of amniotic fluid. In Homo sapiens (Human), this protein is Histone H2B type 2-E.